Reading from the N-terminus, the 156-residue chain is Small ribosomal subunit protein uS7 (156 aa).

This sequence belongs to the universal ribosomal protein uS7 family. In terms of assembly, part of the 30S ribosomal subunit. Contacts proteins S9 and S11.

In terms of biological role, one of the primary rRNA binding proteins, it binds directly to 16S rRNA where it nucleates assembly of the head domain of the 30S subunit. Is located at the subunit interface close to the decoding center, probably blocks exit of the E-site tRNA. The sequence is that of Small ribosomal subunit protein uS7 from Azotobacter vinelandii (strain DJ / ATCC BAA-1303).